The chain runs to 64 residues: Large ribosomal subunit protein bL35 (64 aa).

It belongs to the bacterial ribosomal protein bL35 family.

The sequence is that of Large ribosomal subunit protein bL35 from Shewanella loihica (strain ATCC BAA-1088 / PV-4).